The primary structure comprises 21 residues: Fibrinogen beta chain (21 aa).

The residue at position 1 (Gln-1) is a Pyrrolidone carboxylic acid. The residue at position 6 (Tyr-6) is a Sulfotyrosine.

As to quaternary structure, heterohexamer; disulfide linked. Contains 2 sets of 3 non-identical chains (alpha, beta and gamma). The 2 heterotrimers are in head to head conformation with the N-termini in a small central domain. In terms of processing, conversion of fibrinogen to fibrin is triggered by thrombin, which cleaves fibrinopeptides A and B from alpha and beta chains, and thus exposes the N-terminal polymerization sites responsible for the formation of the soft clot.

The protein resides in the secreted. Functionally, cleaved by the protease thrombin to yield monomers which, together with fibrinogen alpha (FGA) and fibrinogen gamma (FGG), polymerize to form an insoluble fibrin matrix. Fibrin has a major function in hemostasis as one of the primary components of blood clots. In addition, functions during the early stages of wound repair to stabilize the lesion and guide cell migration during re-epithelialization. Was originally thought to be essential for platelet aggregation, based on in vitro studies using anticoagulated blood. However subsequent studies have shown that it is not absolutely required for thrombus formation in vivo. Enhances expression of SELP in activated platelets. Maternal fibrinogen is essential for successful pregnancy. Fibrin deposition is also associated with infection, where it protects against IFNG-mediated hemorrhage. May also facilitate the antibacterial immune response via both innate and T-cell mediated pathways. This chain is Fibrinogen beta chain (FGB), found in Odocoileus hemionus (Mule deer).